We begin with the raw amino-acid sequence, 365 residues long: MPTFTHRIYNFNAGPAMLPTEVMEEAKSEFLNFRGTGMSVMEMSHREKHFQSILDESISDLRELLNLPSRYAVVYFPGGATLQFSAIPFNYLSSGDSCDFALTGVWAKKAFEEAKKFYPNVKSIFNGADSKYMELPTITDESVNDGAKYMYITSNNTIYGTRYKTFPKLKKAPLIADMTSELLSRKLPIEDFSVIFAGAQKNIGPSGLTLVIYDKEKLPEVSHPIPNLMNFALMEKNGSLYNTPPTYSIYIAGLVFKYLKRKGGLAVMEETNERKAKKLYDAIDSSSLFYAPVPVPFRSAMNVVFRSHNDGLDSKFLSLAEEQGFAGLKGYREVGGFRASIYNAMPEEGVDALISFMKEFERSNG.

Residue Arg46 participates in L-glutamate binding. Pyridoxal 5'-phosphate contacts are provided by residues 80–81, Trp106, Thr157, Asp177, and Gln200; that span reads AT. Position 201 is an N6-(pyridoxal phosphate)lysine (Lys201). 242–243 provides a ligand contact to pyridoxal 5'-phosphate; that stretch reads NT.

Belongs to the class-V pyridoxal-phosphate-dependent aminotransferase family. SerC subfamily. Homodimer. Pyridoxal 5'-phosphate serves as cofactor.

It localises to the cytoplasm. It carries out the reaction O-phospho-L-serine + 2-oxoglutarate = 3-phosphooxypyruvate + L-glutamate. The catalysed reaction is 4-(phosphooxy)-L-threonine + 2-oxoglutarate = (R)-3-hydroxy-2-oxo-4-phosphooxybutanoate + L-glutamate. It participates in amino-acid biosynthesis; L-serine biosynthesis; L-serine from 3-phospho-D-glycerate: step 2/3. The protein operates within cofactor biosynthesis; pyridoxine 5'-phosphate biosynthesis; pyridoxine 5'-phosphate from D-erythrose 4-phosphate: step 3/5. In terms of biological role, catalyzes the reversible conversion of 3-phosphohydroxypyruvate to phosphoserine and of 3-hydroxy-2-oxo-4-phosphonooxybutanoate to phosphohydroxythreonine. This is Phosphoserine aminotransferase from Leptospira biflexa serovar Patoc (strain Patoc 1 / Ames).